Consider the following 124-residue polypeptide: Small ribosomal subunit protein uS12 (124 aa).

The residue at position 89 (D89) is a 3-methylthioaspartic acid. Residues 103–124 (DTAGVQNRNRGRSKYGAKRPKK) are disordered. Residues 111–124 (NRGRSKYGAKRPKK) are compositionally biased toward basic residues.

This sequence belongs to the universal ribosomal protein uS12 family. Part of the 30S ribosomal subunit. Contacts proteins S8 and S17. May interact with IF1 in the 30S initiation complex.

Functionally, with S4 and S5 plays an important role in translational accuracy. Its function is as follows. Interacts with and stabilizes bases of the 16S rRNA that are involved in tRNA selection in the A site and with the mRNA backbone. Located at the interface of the 30S and 50S subunits, it traverses the body of the 30S subunit contacting proteins on the other side and probably holding the rRNA structure together. The combined cluster of proteins S8, S12 and S17 appears to hold together the shoulder and platform of the 30S subunit. The chain is Small ribosomal subunit protein uS12 from Desulforudis audaxviator (strain MP104C).